Reading from the N-terminus, the 523-residue chain is 2-isopropylmalate synthase (523 aa).

One can recognise a Pyruvate carboxyltransferase domain in the interval 5–267; sequence VIIFDTTLRD…HTNINHHEIW (263 aa). Positions 14, 202, 204, and 238 each coordinate Mn(2+). The tract at residues 392–523 is regulatory domain; it reads RLDYFSVQSG…QNKENNKETV (132 aa).

The protein belongs to the alpha-IPM synthase/homocitrate synthase family. LeuA type 1 subfamily. As to quaternary structure, homodimer. Requires Mn(2+) as cofactor.

The protein resides in the cytoplasm. The catalysed reaction is 3-methyl-2-oxobutanoate + acetyl-CoA + H2O = (2S)-2-isopropylmalate + CoA + H(+). It participates in amino-acid biosynthesis; L-leucine biosynthesis; L-leucine from 3-methyl-2-oxobutanoate: step 1/4. Functionally, catalyzes the condensation of the acetyl group of acetyl-CoA with 3-methyl-2-oxobutanoate (2-ketoisovalerate) to form 3-carboxy-3-hydroxy-4-methylpentanoate (2-isopropylmalate). This is 2-isopropylmalate synthase from Salmonella paratyphi A (strain ATCC 9150 / SARB42).